We begin with the raw amino-acid sequence, 131 residues long: MHFSKIIAGSALSSVALAEFQNGTVTTHVTATGYTTYCPYPTTITLTICEEENICTKRPIVVSEPTTVTVTEPCIISTSYETTEVVVTTTLPSSLSPSSVAPANVTSFEGAGSKNVASALVGVVAIAAAMM.

Residues Met1–Ala18 form the signal peptide. 2 N-linked (GlcNAc...) asparagine glycosylation sites follow: Asn22 and Asn104. Gly110 carries GPI-anchor amidated glycine lipidation. Positions Ala111–Met131 are cleaved as a propeptide — removed in mature form.

The protein resides in the cell membrane. Functionally, GPI-anchored protein involved in proper cell wall integrity. Does not seem to be directly involved in the synthesis of the cell wall. Required for normal virulence in a mouse model of disseminated candidiasis. The polypeptide is Predicted GPI-anchored protein 26 (PGA26) (Candida albicans (strain SC5314 / ATCC MYA-2876) (Yeast)).